The sequence spans 480 residues: Proline--tRNA ligase (480 aa).

The protein belongs to the class-II aminoacyl-tRNA synthetase family. ProS type 3 subfamily. Homodimer.

The protein localises to the cytoplasm. It carries out the reaction tRNA(Pro) + L-proline + ATP = L-prolyl-tRNA(Pro) + AMP + diphosphate. Functionally, catalyzes the attachment of proline to tRNA(Pro) in a two-step reaction: proline is first activated by ATP to form Pro-AMP and then transferred to the acceptor end of tRNA(Pro). This chain is Proline--tRNA ligase, found in Methanosarcina mazei (strain ATCC BAA-159 / DSM 3647 / Goe1 / Go1 / JCM 11833 / OCM 88) (Methanosarcina frisia).